A 457-amino-acid chain; its full sequence is UDP-N-acetylmuramoyl-tripeptide--D-alanyl-D-alanine ligase (457 aa).

109 to 115 (GSSGKTT) is an ATP binding site.

The protein belongs to the MurCDEF family. MurF subfamily.

The protein resides in the cytoplasm. It carries out the reaction D-alanyl-D-alanine + UDP-N-acetyl-alpha-D-muramoyl-L-alanyl-gamma-D-glutamyl-meso-2,6-diaminopimelate + ATP = UDP-N-acetyl-alpha-D-muramoyl-L-alanyl-gamma-D-glutamyl-meso-2,6-diaminopimeloyl-D-alanyl-D-alanine + ADP + phosphate + H(+). The protein operates within cell wall biogenesis; peptidoglycan biosynthesis. In terms of biological role, involved in cell wall formation. Catalyzes the final step in the synthesis of UDP-N-acetylmuramoyl-pentapeptide, the precursor of murein. In Haemophilus influenzae (strain ATCC 51907 / DSM 11121 / KW20 / Rd), this protein is UDP-N-acetylmuramoyl-tripeptide--D-alanyl-D-alanine ligase.